The following is a 363-amino-acid chain: Peptide chain release factor 2 (363 aa).

At Q251 the chain carries N5-methylglutamine.

The protein belongs to the prokaryotic/mitochondrial release factor family. Methylated by PrmC. Methylation increases the termination efficiency of RF2.

It localises to the cytoplasm. Functionally, peptide chain release factor 2 directs the termination of translation in response to the peptide chain termination codons UGA and UAA. The polypeptide is Peptide chain release factor 2 (prfB) (Helicobacter pylori (strain ATCC 700392 / 26695) (Campylobacter pylori)).